A 187-amino-acid chain; its full sequence is MGVGFGYTEYTDTFNRKYVNNVINFKKTQIKDSVKTKLSDIISKGYSYNKYIKICKYSVEALEIVKKCLFCKNFLCKIKVFKRIKKHIHVKFFHNDYVDKIKEKFNKLVNKSLKKQINHVCLNSEISLKKKLKVLCLTHNYNIIFEDYGYNFKCKVYGWHVYKKRLDFGNEENVKNGKYCIFTMLEY.

Gly-2 carries the N-myristoyl glycine; by host lipid modification.

It belongs to the mimivirus L332/L333/L334 family.

This is an uncharacterized protein from Acanthamoeba polyphaga (Amoeba).